We begin with the raw amino-acid sequence, 183 residues long: Putative 3-methyladenine DNA glycosylase (183 aa).

The protein belongs to the DNA glycosylase MPG family.

This Rickettsia peacockii (strain Rustic) protein is Putative 3-methyladenine DNA glycosylase.